A 71-amino-acid polypeptide reads, in one-letter code: Large ribosomal subunit protein bL28 (71 aa).

Belongs to the bacterial ribosomal protein bL28 family.

The chain is Large ribosomal subunit protein bL28 from Finegoldia magna (strain ATCC 29328 / DSM 20472 / WAL 2508) (Peptostreptococcus magnus).